The sequence spans 345 residues: Isocitrate/homoisocitrate dehydrogenase (345 aa).

Residue 69–71 coordinates NADH; it reads TTT. (2R,3S)-homoisocitrate is bound by residues R86, R96, R111, Y118, K163, and N165. Position 165 (N165) interacts with NADH. Mg(2+) is bound by residues D194, D218, and D222. Residues 251 to 255 and N263 contribute to the NADH site; that span reads GSAPD.

The protein belongs to the isocitrate and isopropylmalate dehydrogenases family. Mn(2+) is required as a cofactor. Mg(2+) serves as cofactor.

The enzyme catalyses D-threo-isocitrate + NAD(+) = 2-oxoglutarate + CO2 + NADH. The catalysed reaction is (2R,3S)-homoisocitrate + NAD(+) = 2-oxoadipate + CO2 + NADH. It participates in amino-acid biosynthesis; L-lysine biosynthesis via AAA pathway; L-alpha-aminoadipate from 2-oxoglutarate: step 4/5. Functionally, catalyzes the NAD(+)-dependent oxidative decarboxylation of homoisocitrate to 2-oxoadipate (alpha-ketoadipate), and of isocitrate to 2-oxoglutarate, at near equal efficiency. May thus play a dual role in glutamate and lysine biosynthesis in vivo. Preferentially uses NAD over NADP. The sequence is that of Isocitrate/homoisocitrate dehydrogenase from Pyrococcus horikoshii (strain ATCC 700860 / DSM 12428 / JCM 9974 / NBRC 100139 / OT-3).